The sequence spans 532 residues: Probable NAD kinase 1 (532 aa).

A compositionally biased stretch (basic and acidic residues) spans Met1–Glu26. A disordered region spans residues Met1–Ile32.

This sequence belongs to the NAD kinase family.

The enzyme catalyses NAD(+) + ATP = ADP + NADP(+) + H(+). This is Probable NAD kinase 1 from Oryza sativa subsp. japonica (Rice).